The chain runs to 238 residues: Thrombin-like enzyme halystase (238 aa).

The region spanning 1–229 (IIGGDECNIN…HLDWIKSIIA (229 aa)) is the Peptidase S1 domain. Intrachain disulfides connect Cys-7–Cys-141, Cys-28–Cys-44, Cys-76–Cys-236, Cys-120–Cys-190, Cys-152–Cys-169, and Cys-180–Cys-205. Residue His-43 is the Charge relay system of the active site. Asn-81 is a glycosylation site (N-linked (GlcNAc...) asparagine). The active-site Charge relay system is the Asp-88. The N-linked (GlcNAc...) asparagine glycan is linked to Asn-100. The active-site Charge relay system is Ser-184.

Belongs to the peptidase S1 family. Snake venom subfamily. Monomer. As to expression, expressed by the venom gland.

Its subcellular location is the secreted. With respect to regulation, inhibited by diisopropylfluorophosphate (DFP), PMSF and leupeptin. In terms of biological role, thrombin-like snake venom serine protease. Cleaves fibrinogen (beta chain of fibrinogen (FGB) and more slowly alpha chain (FGA)) without inducing fibrin clotting and cleaves kininogen to produce bradykinin (KNG), resulting in the reduction of blood pressure. The protein is Thrombin-like enzyme halystase of Gloydius blomhoffii (Mamushi).